Reading from the N-terminus, the 728-residue chain is Tripartite terminase subunit 1 (728 aa).

The C3H1-type zinc finger occupies 186–214; the sequence is CASCFAEAAMLPNQGESVLSMLAAVNCNH. Residues 239–278 are disordered; that stretch reads ARAAGRAGGGRESERRGREDADDEEDDEEEPRDGQGDAGD. Residues 247-257 are compositionally biased toward basic and acidic residues; it reads GGRESERRGRE. Residues 258–269 are compositionally biased toward acidic residues; that stretch reads DADDEEDDEEEP. 653-660 provides a ligand contact to ATP; sequence YNRVWEKS.

Belongs to the herpesviridae TRM1 protein family. As to quaternary structure, associates with TRM2 and TRM3 to form the tripartite terminase complex. Interacts with portal protein.

The protein resides in the host nucleus. In terms of biological role, component of the molecular motor that translocates viral genomic DNA in empty capsid during DNA packaging. Forms a tripartite terminase complex together with TRM2 and TRM3 in the host cytoplasm. Once the complex reaches the host nucleus, it interacts with the capsid portal vertex. This portal forms a ring in which genomic DNA is translocated into the capsid. TRM1 carries an endonuclease activity that plays an important role for the cleavage of concatemeric viral DNA into unit length genomes. This is Tripartite terminase subunit 1 from Equine herpesvirus 2 (strain 86/87) (EHV-2).